Reading from the N-terminus, the 213-residue chain is Probable transaldolase (213 aa).

The active-site Schiff-base intermediate with substrate is the K83.

This sequence belongs to the transaldolase family. Type 3B subfamily.

It is found in the cytoplasm. The enzyme catalyses D-sedoheptulose 7-phosphate + D-glyceraldehyde 3-phosphate = D-erythrose 4-phosphate + beta-D-fructose 6-phosphate. It functions in the pathway carbohydrate degradation; pentose phosphate pathway; D-glyceraldehyde 3-phosphate and beta-D-fructose 6-phosphate from D-ribose 5-phosphate and D-xylulose 5-phosphate (non-oxidative stage): step 2/3. Transaldolase is important for the balance of metabolites in the pentose-phosphate pathway. The protein is Probable transaldolase of Syntrophomonas wolfei subsp. wolfei (strain DSM 2245B / Goettingen).